The following is a 1241-amino-acid chain: ATP-dependent helicase/nuclease subunit A (1241 aa).

Positions 12-485 (SQWTDDQWKA…IDLAKNFRSR (474 aa)) constitute a UvrD-like helicase ATP-binding domain. Position 33-40 (33-40 (AAAGSGKT)) interacts with ATP. One can recognise a UvrD-like helicase C-terminal domain in the interval 505-805 (GEIDYDADAE…RIMTIHKSKG (301 aa)).

The protein belongs to the helicase family. AddA subfamily. In terms of assembly, heterodimer of AddA and AddB/RexB. The cofactor is Mg(2+).

The catalysed reaction is Couples ATP hydrolysis with the unwinding of duplex DNA by translocating in the 3'-5' direction.. It catalyses the reaction ATP + H2O = ADP + phosphate + H(+). Its function is as follows. The heterodimer acts as both an ATP-dependent DNA helicase and an ATP-dependent, dual-direction single-stranded exonuclease. Recognizes the chi site generating a DNA molecule suitable for the initiation of homologous recombination. The AddA nuclease domain is required for chi fragment generation; this subunit has the helicase and 3' -&gt; 5' nuclease activities. The sequence is that of ATP-dependent helicase/nuclease subunit A from Bacillus cereus (strain G9842).